The sequence spans 635 residues: Arabinoxylan arabinofuranohydrolase (635 aa).

A signal peptide spans Met-1–Ala-26. The Proton acceptor role is filled by Asp-49. Catalysis depends on Glu-248, which acts as the Proton donor. Substrate is bound at residue Asn-311. CBM6 domains lie at Thr-379–Thr-508 and Thr-517–Ser-634. Ca(2+) is bound by residues Glu-382, Glu-384, Asn-406, Leu-407, Asp-503, Glu-520, Glu-522, Asp-539, Tyr-544, Asp-620, Trp-624, Asp-625, and Asp-629.

Belongs to the glycosyl hydrolase 43 family.

It localises to the secreted. It catalyses the reaction Hydrolysis of terminal non-reducing alpha-L-arabinofuranoside residues in alpha-L-arabinosides.. Its pathway is glycan degradation; xylan degradation. With respect to regulation, activated by calcium and magnesium. Inhibited by copper. Functionally, cleaves arabinose units from O-2- or O-3-monosubstituted xylose residues, thereby assisting in arabinoxylan (AX) and short-chain arabinoxylo-oligosaccharide (AXOS) degradation. Preferres wheat flour xylan over oat spelt xylan as substrate. Does not display endoxylanase activity. This chain is Arabinoxylan arabinofuranohydrolase (xynD), found in Paenibacillus polymyxa (Bacillus polymyxa).